Here is a 132-residue protein sequence, read N- to C-terminus: Small ribosomal subunit protein uS8 (132 aa).

Belongs to the universal ribosomal protein uS8 family. In terms of assembly, part of the 30S ribosomal subunit. Contacts proteins S5 and S12.

One of the primary rRNA binding proteins, it binds directly to 16S rRNA central domain where it helps coordinate assembly of the platform of the 30S subunit. This Streptococcus sanguinis (strain SK36) protein is Small ribosomal subunit protein uS8.